The primary structure comprises 570 residues: BRICHOS domain-containing protein C09F5.1 (570 aa).

At 1–288 (MVVEQIEVIE…YTPELLRSLC (288 aa)) the chain is on the cytoplasmic side. Composition is skewed to polar residues over residues 93-107 (SGATNSSFLNTSGDS) and 228-246 (TSTLNSRRFPPQSQTSLVS). Disordered regions lie at residues 93–116 (SGATNSSFLNTSGDSRVSYPGADR) and 218–248 (SSWDGDEKKMTSTLNSRRFPPQSQTSLVSRE). The helical transmembrane segment at 289-309 (CILLLLLLLLFLMFIIFNAIF) threads the bilayer. Residues 310 to 570 (NRYAVSEFLL…RKSINNATLV (261 aa)) lie on the Extracellular side of the membrane. Positions 369-461 (TAVDFNTGYV…IDDCEGAQWY (93 aa)) constitute a BRICHOS domain. A disulfide bridge links Cys-395 with Cys-455.

It localises to the membrane. This is BRICHOS domain-containing protein C09F5.1 from Caenorhabditis elegans.